The chain runs to 336 residues: Holliday junction branch migration complex subunit RuvB (336 aa).

The tract at residues 4–184 (ADRLVSADSS…FGIVQRLEFY (181 aa)) is large ATPase domain (RuvB-L). ATP is bound by residues I23, R24, G65, K68, T69, T70, 131 to 133 (EDY), R174, Y184, and R221. T69 contacts Mg(2+). The interval 185-255 (QIPDLQHIVS…IAAQALDMLN (71 aa)) is small ATPAse domain (RuvB-S). The interval 258-336 (AEGFDYMDRK…HFGITPPEMP (79 aa)) is head domain (RuvB-H). Positions 294, 313, and 318 each coordinate DNA.

The protein belongs to the RuvB family. In terms of assembly, homohexamer. Forms an RuvA(8)-RuvB(12)-Holliday junction (HJ) complex. HJ DNA is sandwiched between 2 RuvA tetramers; dsDNA enters through RuvA and exits via RuvB. An RuvB hexamer assembles on each DNA strand where it exits the tetramer. Each RuvB hexamer is contacted by two RuvA subunits (via domain III) on 2 adjacent RuvB subunits; this complex drives branch migration. In the full resolvosome a probable DNA-RuvA(4)-RuvB(12)-RuvC(2) complex forms which resolves the HJ.

Its subcellular location is the cytoplasm. The enzyme catalyses ATP + H2O = ADP + phosphate + H(+). The RuvA-RuvB-RuvC complex processes Holliday junction (HJ) DNA during genetic recombination and DNA repair, while the RuvA-RuvB complex plays an important role in the rescue of blocked DNA replication forks via replication fork reversal (RFR). RuvA specifically binds to HJ cruciform DNA, conferring on it an open structure. The RuvB hexamer acts as an ATP-dependent pump, pulling dsDNA into and through the RuvAB complex. RuvB forms 2 homohexamers on either side of HJ DNA bound by 1 or 2 RuvA tetramers; 4 subunits per hexamer contact DNA at a time. Coordinated motions by a converter formed by DNA-disengaged RuvB subunits stimulates ATP hydrolysis and nucleotide exchange. Immobilization of the converter enables RuvB to convert the ATP-contained energy into a lever motion, pulling 2 nucleotides of DNA out of the RuvA tetramer per ATP hydrolyzed, thus driving DNA branch migration. The RuvB motors rotate together with the DNA substrate, which together with the progressing nucleotide cycle form the mechanistic basis for DNA recombination by continuous HJ branch migration. Branch migration allows RuvC to scan DNA until it finds its consensus sequence, where it cleaves and resolves cruciform DNA. This Klebsiella pneumoniae (strain 342) protein is Holliday junction branch migration complex subunit RuvB.